Consider the following 682-residue polypeptide: Potassium-transporting ATPase ATP-binding subunit (682 aa).

4 helical membrane passes run 34-54 (PVMF…LAMV), 58-78 (IAGS…TVLF), 219-239 (IALT…TATL), and 254-274 (VLVA…LSAI). D307 functions as the 4-aspartylphosphate intermediate in the catalytic mechanism. ATP contacts are provided by residues D344, E348, 377-384 (FTAQSRMS), and K395. Mg(2+) contacts are provided by D518 and D522. Helical transmembrane passes span 588 to 608 (FAII…LNVM), 616 to 636 (AILS…PLAL), and 662 to 682 (LVVP…LGLA).

The protein belongs to the cation transport ATPase (P-type) (TC 3.A.3) family. Type IA subfamily. The system is composed of three essential subunits: KdpA, KdpB and KdpC.

The protein localises to the cell inner membrane. It catalyses the reaction K(+)(out) + ATP + H2O = K(+)(in) + ADP + phosphate + H(+). Functionally, part of the high-affinity ATP-driven potassium transport (or Kdp) system, which catalyzes the hydrolysis of ATP coupled with the electrogenic transport of potassium into the cytoplasm. This subunit is responsible for energy coupling to the transport system and for the release of the potassium ions to the cytoplasm. In Salmonella paratyphi A (strain ATCC 9150 / SARB42), this protein is Potassium-transporting ATPase ATP-binding subunit.